Reading from the N-terminus, the 207-residue chain is Small ribosomal subunit protein uS4 (207 aa).

The interval 33-54 (KLDSKPGQHGRTSGARTSDYGN) is disordered. Residues 42–53 (GRTSGARTSDYG) are compositionally biased toward polar residues. Residues 97-160 (SRLDNVVYRM…KKQVRIAEAL (64 aa)) enclose the S4 RNA-binding domain.

Belongs to the universal ribosomal protein uS4 family. As to quaternary structure, part of the 30S ribosomal subunit. Contacts protein S5. The interaction surface between S4 and S5 is involved in control of translational fidelity.

Functionally, one of the primary rRNA binding proteins, it binds directly to 16S rRNA where it nucleates assembly of the body of the 30S subunit. With S5 and S12 plays an important role in translational accuracy. In Cupriavidus pinatubonensis (strain JMP 134 / LMG 1197) (Cupriavidus necator (strain JMP 134)), this protein is Small ribosomal subunit protein uS4.